The chain runs to 608 residues: Protein Spindly (608 aa).

Methionine 1 is subject to N-acetylmethionine. The stretch at 1 to 445 (MEADITNLRN…LKLKYEPEER (445 aa)) forms a coiled coil. Positions 465–487 (PEETEETAAASATEDGVSRLPPH) are disordered. Phosphoserine is present on residues serine 516, serine 518, and serine 558.

The protein belongs to the Spindly family. As to quaternary structure, interacts with KNTC1 and ZW10. These interactions appear weak and may be transient or indirect. Interacts with dynein intermediate chain and dynactin (DCTN1). Interacts with the catalytically active form of USP45. In terms of processing, monoubiquitinated with'Lys-48' linkage. Deubiquitinated by USP45.

The protein resides in the cytoplasm. It is found in the cytoskeleton. Its subcellular location is the microtubule organizing center. The protein localises to the centrosome. It localises to the chromosome. The protein resides in the centromere. It is found in the kinetochore. Its subcellular location is the nucleus. The protein localises to the spindle pole. In terms of biological role, required for the localization of dynein and dynactin to the mitotic kintochore. Dynein is believed to control the initial lateral interaction between the kinetochore and spindle microtubules and to facilitate the subsequent formation of end-on kinetochore-microtubule attachments mediated by the NDC80 complex. Also required for correct spindle orientation. Does not appear to be required for the removal of spindle assembly checkpoint (SAC) proteins from the kinetochore upon bipolar spindle attachment. Acts as an adapter protein linking the dynein motor complex to various cargos and converts dynein from a non-processive to a highly processive motor in the presence of dynactin. Facilitates the interaction between dynein and dynactin and activates dynein processivity (the ability to move along a microtubule for a long distance without falling off the track). Plays a role in cell migration. The protein is Protein Spindly (Spdl1) of Mus musculus (Mouse).